The following is an 84-amino-acid chain: U2-theraphotoxin-Cg1b 1 (84 aa).

The first 21 residues, 1 to 21, serve as a signal peptide directing secretion; the sequence is MKVSVLITLAVWGVMFLLTSA. A propeptide spanning residues 22–48 is cleaved from the precursor; sequence QERGSDQMDSPAWLKSMERIFQSEERE. 3 disulfides stabilise this stretch: Cys-49–Cys-63, Cys-56–Cys-68, and Cys-62–Cys-76.

It belongs to the neurotoxin 10 (Hwtx-1) family. 06 (F4b) subfamily. Expressed by the venom gland.

It is found in the secreted. Functionally, probable ion channel inhibitor. The polypeptide is U2-theraphotoxin-Cg1b 1 (Chilobrachys guangxiensis (Chinese earth tiger tarantula)).